Here is a 584-residue protein sequence, read N- to C-terminus: HERV-H_2q24.3 provirus ancestral Env polyprotein (584 aa).

Positions 1–35 (MIFAGKAPSNTSTLMKFYSLLLYSLLFSFPFLCHP) are cleaved as a signal peptide. Residues 36-523 (LPLPSYLHHT…WALSNWMSWV (488 aa)) lie on the Extracellular side of the membrane. An N-linked (GlcNAc...) asparagine glycan is attached at asparagine 47. Residues 64–67 (CWLC) carry the CXXC motif. N-linked (GlcNAc...) asparagine glycans are attached at residues asparagine 199, asparagine 222, asparagine 265, asparagine 283, asparagine 352, and asparagine 370. Residues 388-408 (VIPLIPLMVGLGLSASTVALG) form a fusion peptide region. Residues 454-470 (LQNRRGLDLLTAEKGGL) carry the CKS-17 motif. Cysteine 471 and cysteine 478 form a disulfide bridge. The CX6CC signature appears at 471-479 (CIFLNEECC). Asparagine 483 carries N-linked (GlcNAc...) asparagine glycosylation. A helical transmembrane segment spans residues 524-544 (LPIVSPLIPIFLLLLFGPCIF). The Cytoplasmic segment spans residues 545 to 584 (RLVSQFIQNRIQAITNHSIRQMFLLTSPQYHPLPQDLPSA).

The protein belongs to the gamma type-C retroviral envelope protein family. HERV class-I H env subfamily. As to quaternary structure, the surface (SU) and transmembrane (TM) proteins form a heterodimer. SU and TM are attached by noncovalent interactions or by a labile interchain disulfide bond. Specific enzymatic cleavages in vivo yield the mature SU and TM proteins. In terms of processing, the CXXC motif is highly conserved across a broad range of retroviral envelope proteins. It is thought to participate in the formation of a labile disulfide bond possibly with the CX6CC motif present in the transmembrane protein. Isomerization of the intersubunit disulfide bond to an SU intrachain disulfide bond is thought to occur upon receptor recognition in order to allow membrane fusion. As to expression, low expression in skin and testis. No expression in several cell lines.

The protein resides in the virion. It localises to the cell membrane. In terms of biological role, retroviral envelope proteins mediate receptor recognition and membrane fusion during early infection. Endogenous envelope proteins may have kept, lost or modified their original function during evolution. This endogenous envelope protein has lost its original fusogenic properties but has immunosuppressive properties in vivo. SU mediates receptor recognition. Functionally, TM anchors the envelope heterodimer to the viral membrane through one transmembrane domain. The other hydrophobic domain, called fusion peptide, mediates fusion of the viral membrane with the target cell membrane. This Homo sapiens (Human) protein is HERV-H_2q24.3 provirus ancestral Env polyprotein.